A 530-amino-acid chain; its full sequence is MKLGRDIPIYKLIIIKNESIENNLKEISFSDNFKCQICEGLLISSLIPNRMKALQCINGHCFCLTCWESILEIKSECPTCRIQIQSMNTLSNNLFIIKSISESIKIHCPNYLNFDNSNNFNGCKEIITIDEIDRHESKCEFRFIKCSINNQCNEIIRFNERDKHESQCDFIIQKCTHCDESVQMKQMQGHILFECLKVLITCQHCSLQFTRLKLQNHIENHCKEIKIECPFKSLKIIYNNNNNDNDNNDSDENNSNQSLSSSSLSSSIIPLSPCNELMKRSELSKHFIRNHQYHNELVSIVLKKQENKIKKLETIIQQNNVNQNFEISIIKHSNSLTRDSFYKENKKKDKLIQDLMKRVLILEHQQQQNQIQNQIQNQIQKLSNKSIFTTTTTTTSTSDKNNNNNNNNNNNNNNNNEDEEDDDNIKNNDNQGNLKSLREMFNTISNFKDDENEQQQIQQQQQLPFTSFGPLSVQQQNNPTKQFNQLSQPQTQPQSQSQSQSLFGEWSPITINQNQNTPSNPFSIFSGTSL.

The RING-type; degenerate zinc-finger motif lies at 35 to 81; sequence CQICEGLLISSLIPNRMKALQCINGHCFCLTCWESILEIKSECPTCR. 2 consecutive TRAF-type zinc fingers follow at residues 134–188 and 189–246; these read RHES…KQMQ and GHIL…NDND. 3 disordered regions span residues 242 to 267, 391 to 432, and 483 to 530; these read NNDN…LSSS, TTTT…DNQG, and FNQL…GTSL. Low complexity-rich tracts occupy residues 253–267, 391–415, and 485–502; these read NNSN…LSSS, TTTT…NNNN, and QLSQ…SQSL. The stretch at 361–422 forms a coiled coil; sequence ILEHQQQQNQ…NNNNEDEEDD (62 aa). Polar residues predominate over residues 509 to 530; the sequence is ITINQNQNTPSNPFSIFSGTSL.

Belongs to the TNF receptor-associated factor family.

The protein localises to the cytoplasm. Functionally, probable adapter protein and signal transducer that links members of the tumor necrosis factor receptor family to different signaling pathways by association with the receptor cytoplasmic domain and kinases. The protein is TNF receptor-associated factor family protein DDB_G0272829 of Dictyostelium discoideum (Social amoeba).